The sequence spans 490 residues: Bifunctional NAD(P)H-hydrate repair enzyme Nnr (490 aa).

Residues 1–204 (MKEIDELTIK…NIGHPVHLIN (204 aa)) enclose the YjeF N-terminal domain. Residues 1 to 204 (MKEIDELTIK…NIGHPVHLIN (204 aa)) are NAD(P)H-hydrate epimerase. An NADPHX 1; for epimerase activity region spans residues 51–55 (NNGGD). Residues Asn-52 and Asp-114 each coordinate K(+). Residues 118–124 (GTGLRGE) are NADPHX 1; for epimerase activity. Residues Tyr-129 and Asp-147 each contribute to the (6S)-NADPHX site. Residue Ser-150 coordinates K(+). The YjeF C-terminal domain maps to 212 to 488 (TREMVRSLLP…RLIPEAIRRL (277 aa)). Positions 212-490 (TREMVRSLLP…IPEAIRRLKE (279 aa)) are ADP-dependent (S)-NAD(P)H-hydrate dehydratase. Residue Gly-317 participates in (6S)-NADPHX binding. Residues 366–372 (HPGEMAR) are NADPHX 2; for dehydratase activity. ADP contacts are provided by residues 402-406 (KSATT) and 421-430 (NTGLSKGGSG). Asp-431 provides a ligand contact to (6S)-NADPHX.

The protein in the N-terminal section; belongs to the NnrE/AIBP family. In the C-terminal section; belongs to the NnrD/CARKD family. K(+) is required as a cofactor.

The enzyme catalyses (6S)-NADHX + ADP = AMP + phosphate + NADH + H(+). The catalysed reaction is (6S)-NADPHX + ADP = AMP + phosphate + NADPH + H(+). It carries out the reaction (6R)-NADHX = (6S)-NADHX. It catalyses the reaction (6R)-NADPHX = (6S)-NADPHX. Bifunctional enzyme that catalyzes the epimerization of the S- and R-forms of NAD(P)HX and the dehydration of the S-form of NAD(P)HX at the expense of ADP, which is converted to AMP. This allows the repair of both epimers of NAD(P)HX, a damaged form of NAD(P)H that is a result of enzymatic or heat-dependent hydration. The protein is Bifunctional NAD(P)H-hydrate repair enzyme Nnr (nnr) of Thermotoga maritima (strain ATCC 43589 / DSM 3109 / JCM 10099 / NBRC 100826 / MSB8).